The following is a 307-amino-acid chain: PCP degradation transcriptional activation protein (307 aa).

The HTH lysR-type domain maps to 6-63 (LPLGHLMVFDALYRHGSAGKAAHALSMPQPTLSRWLAQLRTHFDDPLFVRTRSGMEPT). A DNA-binding region (H-T-H motif) is located at residues 23-42 (AGKAAHALSMPQPTLSRWLA).

Belongs to the LysR transcriptional regulatory family.

Its function is as follows. Transcriptional activator for the pcpA, pcpB and pcpE genes for pentachlorophenol (PCP) degradation. Essential for PCP degradation. The protein is PCP degradation transcriptional activation protein (pcpR) of Sphingobium chlorophenolicum.